The sequence spans 262 residues: 3-methyl-2-oxobutanoate hydroxymethyltransferase (262 aa).

2 residues coordinate Mg(2+): D43 and D82. Residues 43–44 (DS), D82, and K111 each bind 3-methyl-2-oxobutanoate. Residue E113 coordinates Mg(2+). The active-site Proton acceptor is E180.

Belongs to the PanB family. In terms of assembly, homodecamer; pentamer of dimers. It depends on Mg(2+) as a cofactor.

The protein localises to the cytoplasm. It catalyses the reaction 3-methyl-2-oxobutanoate + (6R)-5,10-methylene-5,6,7,8-tetrahydrofolate + H2O = 2-dehydropantoate + (6S)-5,6,7,8-tetrahydrofolate. It functions in the pathway cofactor biosynthesis; coenzyme A biosynthesis. Its function is as follows. Catalyzes the reversible reaction in which hydroxymethyl group from 5,10-methylenetetrahydrofolate is transferred onto alpha-ketoisovalerate to form ketopantoate. The polypeptide is 3-methyl-2-oxobutanoate hydroxymethyltransferase (Pyrobaculum aerophilum (strain ATCC 51768 / DSM 7523 / JCM 9630 / CIP 104966 / NBRC 100827 / IM2)).